Reading from the N-terminus, the 80-residue chain is Trefoil factor 3 (80 aa).

An N-terminal signal peptide occupies residues 1–21 (MEARVLWLLALVLALGSSSLA). The 44-residue stretch at 30–73 (NLCAVPAKNRVDCGYPEISPEQCVNRGCCFDSSIPEVPWCFKPL) folds into the P-type domain. 3 cysteine pairs are disulfide-bonded: Cys32–Cys58, Cys42–Cys57, and Cys52–Cys69.

As to quaternary structure, monomer. Homodimer; disulfide-linked.

It localises to the secreted. It is found in the extracellular space. Its subcellular location is the extracellular matrix. The protein resides in the cytoplasm. In terms of biological role, involved in the maintenance and repair of the intestinal mucosa. Promotes the mobility of epithelial cells in healing processes (motogen). The polypeptide is Trefoil factor 3 (TFF3) (Felis catus (Cat)).